A 954-amino-acid chain; its full sequence is Valine--tRNA ligase (954 aa).

The 'HIGH' region signature appears at proline 48–histidine 58. A 'KMSKS' region motif is present at residues lysine 560 to serine 564. ATP is bound at residue lysine 563. The stretch at alanine 883–alanine 953 forms a coiled coil.

The protein belongs to the class-I aminoacyl-tRNA synthetase family. ValS type 1 subfamily. As to quaternary structure, monomer.

The protein localises to the cytoplasm. The enzyme catalyses tRNA(Val) + L-valine + ATP = L-valyl-tRNA(Val) + AMP + diphosphate. Catalyzes the attachment of valine to tRNA(Val). As ValRS can inadvertently accommodate and process structurally similar amino acids such as threonine, to avoid such errors, it has a 'posttransfer' editing activity that hydrolyzes mischarged Thr-tRNA(Val) in a tRNA-dependent manner. The chain is Valine--tRNA ligase from Haemophilus influenzae (strain 86-028NP).